The primary structure comprises 168 residues: Lipoprotein signal peptidase (168 aa).

4 consecutive transmembrane segments (helical) span residues 15 to 35 (WLWLALVVFLADIGIKFIVME), 47 to 67 (VLPFFNLLYVHNYGAAFSFLS), 75 to 95 (WLFTGIAFVVTGLLTYWMSKL), and 107 to 127 (AMIIGGAIGNVFDRMVHGFVV). Catalysis depends on residues Asp-128 and Asp-146. A helical transmembrane segment spans residues 141-161 (AFNLADTAICLGAAMIILDGF).

It belongs to the peptidase A8 family.

Its subcellular location is the cell inner membrane. The catalysed reaction is Release of signal peptides from bacterial membrane prolipoproteins. Hydrolyzes -Xaa-Yaa-Zaa-|-(S,diacylglyceryl)Cys-, in which Xaa is hydrophobic (preferably Leu), and Yaa (Ala or Ser) and Zaa (Gly or Ala) have small, neutral side chains.. Its pathway is protein modification; lipoprotein biosynthesis (signal peptide cleavage). Its function is as follows. This protein specifically catalyzes the removal of signal peptides from prolipoproteins. In Vibrio vulnificus (strain CMCP6), this protein is Lipoprotein signal peptidase.